The primary structure comprises 144 residues: High mobility group B protein 2 (144 aa).

Basic and acidic residues-rich tracts occupy residues M1–S12 and A73–K94. Disordered regions lie at residues M1–A42, K57–K94, and Y106–D144. The HMG box DNA-binding region spans P38–N107. Residue S125 is modified to Phosphoserine. Positions V127–D144 are enriched in acidic residues.

Belongs to the HMGB family. Mostly expressed in cotyledons, hypocotyls, leaves, and flowers (excluding pedicels), also present in roots and stems.

Its subcellular location is the nucleus. The protein localises to the cytoplasm. The protein resides in the cytosol. Binds preferentially double-stranded DNA. Confers sensitivity to salt and drought stresses. In Arabidopsis thaliana (Mouse-ear cress), this protein is High mobility group B protein 2 (HMGB2).